A 372-amino-acid chain; its full sequence is GRASP65 homolog protein 1 (372 aa).

The residue at position 1 (Met1) is an N-acetylmethionine. 2 PDZ GRASP-type domains span residues 66–183 (SGLR…WTPL) and 188–276 (FTYH…YGFL). The interval 66 to 292 (SGLRIVWVDE…KHCPQQAQQQ (227 aa)) is GRASP. Ser155 is subject to Phosphoserine. Residues 312 to 372 (VPSAFTAPPV…PPPQKQSSSD (61 aa)) form a disordered region.

As to quaternary structure, homodimer. Interacts with BUG1 (via C-terminus), probably forming a heterooligomer consisting of a GRH1 dimer and a BUG1 dimer. Interacts with COPII coat components SEC23, SEC24, SFB2 and SFB3. In terms of processing, N-terminal acetylation; by N-terminal acetyltransferase NatC.

It is found in the cytoplasm. The protein localises to the golgi apparatus. Its subcellular location is the cis-Golgi network membrane. In terms of biological role, involved in the spindle assembly checkpoint. Involved in ER to Golgi vesicle-mediated transport by either facilitating USO1-dependent and -independent tethering or increasing target accuracy of fusion events of COPII-coated vesicles. The protein is GRASP65 homolog protein 1 (GRH1) of Saccharomyces cerevisiae (strain ATCC 204508 / S288c) (Baker's yeast).